The chain runs to 233 residues: MIPWLGPEPVFPPVSQALSHPNGLLAAGGDLSSRRILTAYSEGIFPWFSDGEPILWWSPAPRMVMFPDELKVSRSLAKTLRNLDYEIRVDSAFPEVMRACAEPRAGQDGTWIVPEMVAAYCRLHQIGYAHSFETWIDGELAGGLYGVSIGRMFYGESMFSRRRDASKLAFVHMVRHLQAQGVTMIDCQMHTEHLASLGARLISRDVFLATLKENVRHPQPDRMWDYHYRHESS.

Belongs to the L/F-transferase family.

The protein resides in the cytoplasm. The catalysed reaction is N-terminal L-lysyl-[protein] + L-leucyl-tRNA(Leu) = N-terminal L-leucyl-L-lysyl-[protein] + tRNA(Leu) + H(+). It carries out the reaction N-terminal L-arginyl-[protein] + L-leucyl-tRNA(Leu) = N-terminal L-leucyl-L-arginyl-[protein] + tRNA(Leu) + H(+). It catalyses the reaction L-phenylalanyl-tRNA(Phe) + an N-terminal L-alpha-aminoacyl-[protein] = an N-terminal L-phenylalanyl-L-alpha-aminoacyl-[protein] + tRNA(Phe). Its function is as follows. Functions in the N-end rule pathway of protein degradation where it conjugates Leu, Phe and, less efficiently, Met from aminoacyl-tRNAs to the N-termini of proteins containing an N-terminal arginine or lysine. The protein is Leucyl/phenylalanyl-tRNA--protein transferase of Chromobacterium violaceum (strain ATCC 12472 / DSM 30191 / JCM 1249 / CCUG 213 / NBRC 12614 / NCIMB 9131 / NCTC 9757 / MK).